The chain runs to 429 residues: Dihydroorotase (429 aa).

Zn(2+) contacts are provided by H62 and H64. Substrate-binding positions include 64–66 (HFR) and N96. Positions 154, 181, and 234 each coordinate Zn(2+). N280 is a substrate binding site. A Zn(2+)-binding site is contributed by D307. D307 is a catalytic residue. Substrate-binding positions include H311 and 325-326 (FG).

This sequence belongs to the metallo-dependent hydrolases superfamily. DHOase family. Class I DHOase subfamily. Zn(2+) is required as a cofactor.

The enzyme catalyses (S)-dihydroorotate + H2O = N-carbamoyl-L-aspartate + H(+). The protein operates within pyrimidine metabolism; UMP biosynthesis via de novo pathway; (S)-dihydroorotate from bicarbonate: step 3/3. In terms of biological role, catalyzes the reversible cyclization of carbamoyl aspartate to dihydroorotate. The polypeptide is Dihydroorotase (Latilactobacillus sakei subsp. sakei (strain 23K) (Lactobacillus sakei subsp. sakei)).